We begin with the raw amino-acid sequence, 141 residues long: Large ribosomal subunit protein uL16 (141 aa).

It belongs to the universal ribosomal protein uL16 family. As to quaternary structure, part of the 50S ribosomal subunit. Contacts the CTC protein (RL25).

Its function is as follows. Binds the 5S and 23S rRNAs and is also seen to make contacts with the A and P site tRNAs. Interacts with A site tRNA mimics, and is probably one of the key factors, along with a helix of the 23S rRNA, in positioning tRNA stems in the peptidyl-transferase center. The sequence is that of Large ribosomal subunit protein uL16 (rplP) from Deinococcus radiodurans (strain ATCC 13939 / DSM 20539 / JCM 16871 / CCUG 27074 / LMG 4051 / NBRC 15346 / NCIMB 9279 / VKM B-1422 / R1).